The primary structure comprises 148 residues: Cystatin-C (148 aa).

A signal peptide spans M1–A30. The residue at position 31 (Q31) is a Pyrrolidone carboxylic acid. A Secondary area of contact motif is present at residues Q84–G88. 2 cysteine pairs are disulfide-bonded: C102–C112 and C126–C146.

It localises to the secreted. Its function is as follows. This is a thiol proteinase inhibitor. This chain is Cystatin-C (CST3), found in Bos taurus (Bovine).